The sequence spans 443 residues: Protein IQ-DOMAIN 11 (443 aa).

Residues 5 to 20 form a calmodulin-binding region; sequence KGLFTVLKRIFISEVN. 2 consecutive short sequence motifs (nuclear localization signal) follow at residues 11-18 and 27-34; these read LKRIFISE and RRKWTFWK. The interval 44-65 is disordered; that stretch reads ITAPPEHRTSHESHEEQKEEIV. Over residues 48–64 the composition is skewed to basic and acidic residues; it reads PEHRTSHESHEEQKEEI. IQ domains lie at 113 to 138 and 139 to 161; these read AATR…GIVK and LQAY…CLQS. Over residues 277-293 the composition is skewed to basic and acidic residues; the sequence is FSSKTKPKDETLNEKQL. The interval 277–361 is disordered; the sequence is FSSKTKPKDE…PRSFDTQSES (85 aa).

Belongs to the IQD family. As to quaternary structure, binds to multiple calmodulin (CaM) in the presence of Ca(2+) and CaM-like proteins. Expressed in hypocotyls, cotyledons, leaves and petioles.

It is found in the nucleus. The protein resides in the cytoplasm. The protein localises to the cytoskeleton. May be involved in cooperative interactions with calmodulins or calmodulin-like proteins. Recruits calmodulin proteins to microtubules, thus being a potential scaffold in cellular signaling and trafficking. Regulates cell shape and elongation in aerial organs (i.e. epidermis pavement cells) probably by regulating cortical microtubules (MT) arrays orientation. May associate with nucleic acids and regulate gene expression at the transcriptional or post-transcriptional level. This Arabidopsis thaliana (Mouse-ear cress) protein is Protein IQ-DOMAIN 11.